Reading from the N-terminus, the 935-residue chain is Isoleucine--tRNA ligase (935 aa).

Residues 58–68 (PYANGSIHVGH) carry the 'HIGH' region motif. Residue E558 participates in L-isoleucyl-5'-AMP binding. A 'KMSKS' region motif is present at residues 599–603 (KMSKS). K602 contributes to the ATP binding site. Residues C897, C900, C917, and C920 each contribute to the Zn(2+) site.

It belongs to the class-I aminoacyl-tRNA synthetase family. IleS type 1 subfamily. As to quaternary structure, monomer. Zn(2+) serves as cofactor.

It is found in the cytoplasm. The catalysed reaction is tRNA(Ile) + L-isoleucine + ATP = L-isoleucyl-tRNA(Ile) + AMP + diphosphate. In terms of biological role, catalyzes the attachment of isoleucine to tRNA(Ile). As IleRS can inadvertently accommodate and process structurally similar amino acids such as valine, to avoid such errors it has two additional distinct tRNA(Ile)-dependent editing activities. One activity is designated as 'pretransfer' editing and involves the hydrolysis of activated Val-AMP. The other activity is designated 'posttransfer' editing and involves deacylation of mischarged Val-tRNA(Ile). This Francisella tularensis subsp. novicida (strain U112) protein is Isoleucine--tRNA ligase.